A 163-amino-acid polypeptide reads, in one-letter code: Cyclic pyranopterin monophosphate synthase (163 aa).

Substrate-binding positions include 75–77 and 115–116; these read MCH and ME. Residue aspartate 130 is part of the active site.

It belongs to the MoaC family. Homohexamer; trimer of dimers.

The catalysed reaction is (8S)-3',8-cyclo-7,8-dihydroguanosine 5'-triphosphate = cyclic pyranopterin phosphate + diphosphate. Its pathway is cofactor biosynthesis; molybdopterin biosynthesis. Functionally, catalyzes the conversion of (8S)-3',8-cyclo-7,8-dihydroguanosine 5'-triphosphate to cyclic pyranopterin monophosphate (cPMP). The sequence is that of Cyclic pyranopterin monophosphate synthase from Bacillus pumilus (strain SAFR-032).